Here is a 132-residue protein sequence, read N- to C-terminus: Two-component response regulator ORR42 (132 aa).

In terms of domain architecture, Response regulatory spans 11–125; sequence RALLVEDIKV…LEHILQETRS (115 aa). Residue Asp61 is modified to 4-aspartylphosphate.

This sequence belongs to the ARR family. Type-C subfamily. Post-translationally, two-component system major event consists of a His-to-Asp phosphorelay between a sensor histidine kinase (HK) and a response regulator (RR). In plants, the His-to-Asp phosphorelay involves an additional intermediate named Histidine-containing phosphotransfer protein (HPt). This multistep phosphorelay consists of a His-Asp-His-Asp sequential transfer of a phosphate group between first a His and an Asp of the HK protein, followed by the transfer to a conserved His of the HPt protein and finally the transfer to an Asp in the receiver domain of the RR protein.

Functions as a response regulator involved in His-to-Asp phosphorelay signal transduction system. Phosphorylation of the Asp residue in the receiver domain activates the ability of the protein to promote the transcription of target genes. May directly activate some type-A response regulators in response to cytokinins. This Oryza sativa subsp. japonica (Rice) protein is Two-component response regulator ORR42.